A 907-amino-acid polypeptide reads, in one-letter code: Protein translocase subunit SecA (907 aa).

ATP-binding positions include Gln-87, 105–109 (GEGKT), and Asp-510. Zn(2+) contacts are provided by Cys-892, Cys-894, Cys-903, and His-904.

Belongs to the SecA family. Monomer and homodimer. Part of the essential Sec protein translocation apparatus which comprises SecA, SecYEG and auxiliary proteins SecDF-YajC and YidC. Zn(2+) serves as cofactor.

The protein localises to the cell inner membrane. The protein resides in the cytoplasm. It carries out the reaction ATP + H2O + cellular proteinSide 1 = ADP + phosphate + cellular proteinSide 2.. Functionally, part of the Sec protein translocase complex. Interacts with the SecYEG preprotein conducting channel. Has a central role in coupling the hydrolysis of ATP to the transfer of proteins into and across the cell membrane, serving both as a receptor for the preprotein-SecB complex and as an ATP-driven molecular motor driving the stepwise translocation of polypeptide chains across the membrane. The protein is Protein translocase subunit SecA of Acinetobacter baumannii (strain ATCC 17978 / DSM 105126 / CIP 53.77 / LMG 1025 / NCDC KC755 / 5377).